The chain runs to 337 residues: Glyceraldehyde-3-phosphate dehydrogenase 3, cytosolic (337 aa).

NAD(+)-binding positions include 13–14, Asp35, and Arg82; that span reads RI. D-glyceraldehyde 3-phosphate-binding positions include 153 to 155, Thr184, 213 to 214, and Arg236; these read SCT and TG. Catalysis depends on Cys154, which acts as the Nucleophile. Asn318 is a binding site for NAD(+).

It belongs to the glyceraldehyde-3-phosphate dehydrogenase family. As to quaternary structure, homotetramer.

It localises to the cytoplasm. The catalysed reaction is D-glyceraldehyde 3-phosphate + phosphate + NAD(+) = (2R)-3-phospho-glyceroyl phosphate + NADH + H(+). It functions in the pathway carbohydrate degradation; glycolysis; pyruvate from D-glyceraldehyde 3-phosphate: step 1/5. Functionally, key enzyme in glycolysis that catalyzes the first step of the pathway by converting D-glyceraldehyde 3-phosphate (G3P) into 3-phospho-D-glyceroyl phosphate. Essential for the maintenance of cellular ATP levels and carbohydrate metabolism. The chain is Glyceraldehyde-3-phosphate dehydrogenase 3, cytosolic (GAPC3) from Oryza sativa subsp. japonica (Rice).